The primary structure comprises 92 residues: YcgL domain-containing protein VC_1957 (92 aa).

One can recognise a YcgL domain in the interval 1–84 (MLCSIYKSPK…PPENLLEQHK (84 aa)). The disordered stretch occupies residues 69–92 (FLQLPPPPENLLEQHKERKARQTP).

In Vibrio cholerae serotype O1 (strain ATCC 39315 / El Tor Inaba N16961), this protein is YcgL domain-containing protein VC_1957.